The sequence spans 159 residues: 6,7-dimethyl-8-ribityllumazine synthase (159 aa).

5-amino-6-(D-ribitylamino)uracil-binding positions include Trp-28, 59–61 (ALE), and 81–83 (CVI). 86–87 (GT) is a (2S)-2-hydroxy-3-oxobutyl phosphate binding site. The active-site Proton donor is the His-89. Asn-114 contributes to the 5-amino-6-(D-ribitylamino)uracil binding site. Arg-128 contacts (2S)-2-hydroxy-3-oxobutyl phosphate.

It belongs to the DMRL synthase family.

The catalysed reaction is (2S)-2-hydroxy-3-oxobutyl phosphate + 5-amino-6-(D-ribitylamino)uracil = 6,7-dimethyl-8-(1-D-ribityl)lumazine + phosphate + 2 H2O + H(+). It participates in cofactor biosynthesis; riboflavin biosynthesis; riboflavin from 2-hydroxy-3-oxobutyl phosphate and 5-amino-6-(D-ribitylamino)uracil: step 1/2. In terms of biological role, catalyzes the formation of 6,7-dimethyl-8-ribityllumazine by condensation of 5-amino-6-(D-ribitylamino)uracil with 3,4-dihydroxy-2-butanone 4-phosphate. This is the penultimate step in the biosynthesis of riboflavin. The polypeptide is 6,7-dimethyl-8-ribityllumazine synthase (Corynebacterium kroppenstedtii (strain DSM 44385 / JCM 11950 / CIP 105744 / CCUG 35717)).